The primary structure comprises 354 residues: MHFTSSLLALVALTTQALAFPLNDLPKRDSGLAVKLSSIGNTRVKAVITNTADHEISFLKFNTFFDSSATRKVSIAKDGSVVPFNGLYRYYNAAKLPKEAFKTLAPGASAEATFDIAETSDLSAGGSFSVFSDGMIPVADGSGTTLTGAIKYSTNELKMNVDGALAAKVQSAIPKLEKRTRIDPDCPGEYRNVLTQGLQTAAGYASRAAEAATNGDQLEEFFKTTDQQTAQNIAQRFQAIAQECGSDSQGSTTYFCDDRFNGCEQGVIAYTIPAQSVVVNCPAYWELPPVVNQGLDPDHGYVVVHEFTHATSIFSPGTQDHAYGYENCIRLSPEQCISNADNYSLYAASVSRGG.

Positions 1–19 are cleaved as a signal peptide; that stretch reads MHFTSSLLALVALTTQALA. The propeptide occupies 20–179; the sequence is FPLNDLPKRD…QSAIPKLEKR (160 aa). Disulfide bonds link C186/C256 and C263/C281. Zn(2+) is bound at residue H305. The active site involves E306. Residues H309 and D320 each coordinate Zn(2+).

It belongs to the peptidase M35 family. Requires Zn(2+) as cofactor.

It is found in the secreted. It carries out the reaction Preferential cleavage of bonds with hydrophobic residues in P1'. Also 3-Asn-|-Gln-4 and 8-Gly-|-Ser-9 bonds in insulin B chain.. In terms of biological role, secreted metalloproteinase that allows assimilation of proteinaceous substrates. Shows high activities on basic nuclear substrates such as histone and protamine. May be involved in virulence. In Coccidioides posadasii (strain C735) (Valley fever fungus), this protein is Neutral protease 2 homolog MEP3 (MEP3).